Here is a 793-residue protein sequence, read N- to C-terminus: Phenylalanine--tRNA ligase beta subunit (793 aa).

One can recognise a tRNA-binding domain in the interval 39 to 148 (AGQFTHVIVA…DEAPIGMDLR (110 aa)). The 77-residue stretch at 401–477 (PGTVSFLFDT…RLYGYDKLQA (77 aa)) folds into the B5 domain. Asp-455, Asp-461, Glu-464, and Glu-465 together coordinate Mg(2+). One can recognise an FDX-ACB domain in the interval 698 to 792 (SKYPQIRRDL…LENEFSILLR (95 aa)).

This sequence belongs to the phenylalanyl-tRNA synthetase beta subunit family. Type 1 subfamily. As to quaternary structure, tetramer of two alpha and two beta subunits. It depends on Mg(2+) as a cofactor.

Its subcellular location is the cytoplasm. It carries out the reaction tRNA(Phe) + L-phenylalanine + ATP = L-phenylalanyl-tRNA(Phe) + AMP + diphosphate + H(+). The protein is Phenylalanine--tRNA ligase beta subunit of Legionella pneumophila (strain Lens).